We begin with the raw amino-acid sequence, 175 residues long: Development-specific protein S homolog (175 aa).

2 Beta/gamma crystallin 'Greek key' domains span residues 2-46 (ANIT…KVPP) and 48-86 (VKAI…KVMS). A connecting peptide region spans residues 87-90 (VPVQ). 2 consecutive Beta/gamma crystallin 'Greek key' domains span residues 91–135 (PRAR…KPEG) and 136–175 (LKVV…RITP).

This sequence belongs to the beta/gamma-crystallin family.

The protein resides in the spore. It localises to the perispore. This is Development-specific protein S homolog (ops) from Myxococcus xanthus.